We begin with the raw amino-acid sequence, 297 residues long: 4-hydroxy-tetrahydrodipicolinate synthase (297 aa).

T50 provides a ligand contact to pyruvate. Y138 serves as the catalytic Proton donor/acceptor. K166 (schiff-base intermediate with substrate) is an active-site residue. I208 contributes to the pyruvate binding site.

The protein belongs to the DapA family. In terms of assembly, homotetramer; dimer of dimers.

Its subcellular location is the cytoplasm. The enzyme catalyses L-aspartate 4-semialdehyde + pyruvate = (2S,4S)-4-hydroxy-2,3,4,5-tetrahydrodipicolinate + H2O + H(+). The protein operates within amino-acid biosynthesis; L-lysine biosynthesis via DAP pathway; (S)-tetrahydrodipicolinate from L-aspartate: step 3/4. In terms of biological role, catalyzes the condensation of (S)-aspartate-beta-semialdehyde [(S)-ASA] and pyruvate to 4-hydroxy-tetrahydrodipicolinate (HTPA). The chain is 4-hydroxy-tetrahydrodipicolinate synthase from Haemophilus ducreyi (strain 35000HP / ATCC 700724).